The chain runs to 309 residues: tRNA dimethylallyltransferase (309 aa).

9-16 is an ATP binding site; sequence GPTAVGKT. A substrate-binding site is contributed by 11–16; the sequence is TAVGKT. An interaction with substrate tRNA region spans residues 34-37; sequence DSMQ.

It belongs to the IPP transferase family. Monomer. Mg(2+) is required as a cofactor.

The catalysed reaction is adenosine(37) in tRNA + dimethylallyl diphosphate = N(6)-dimethylallyladenosine(37) in tRNA + diphosphate. Its function is as follows. Catalyzes the transfer of a dimethylallyl group onto the adenine at position 37 in tRNAs that read codons beginning with uridine, leading to the formation of N6-(dimethylallyl)adenosine (i(6)A). This is tRNA dimethylallyltransferase from Clostridium kluyveri (strain NBRC 12016).